The following is a 345-amino-acid chain: Very-long-chain 3-oxoacyl-CoA reductase (345 aa).

Residues G26–V46 traverse the membrane as a helical segment. V71, D125, D133, N152, Y219, K223, I252, and S254 together coordinate NADP(+). The Proton donor role is filled by Y219. K223 acts as the Lowers pKa of active site Tyr in catalysis.

It belongs to the short-chain dehydrogenases/reductases (SDR) family.

Its subcellular location is the endoplasmic reticulum membrane. The catalysed reaction is a very-long-chain (3R)-3-hydroxyacyl-CoA + NADP(+) = a very-long-chain 3-oxoacyl-CoA + NADPH + H(+). Its pathway is lipid metabolism; fatty acid biosynthesis. Component of the microsomal membrane bound fatty acid elongation system, which produces the 26-carbon very long-chain fatty acids (VLCFA) from palmitate. Catalyzes the reduction of the 3-ketoacyl-CoA intermediate that is formed in each cycle of fatty acid elongation. VLCFAs serve as precursors for ceramide and sphingolipids. The sequence is that of Very-long-chain 3-oxoacyl-CoA reductase from Aspergillus clavatus (strain ATCC 1007 / CBS 513.65 / DSM 816 / NCTC 3887 / NRRL 1 / QM 1276 / 107).